The primary structure comprises 118 residues: Large ribosomal subunit protein uL22 (118 aa).

It belongs to the universal ribosomal protein uL22 family. In terms of assembly, part of the 50S ribosomal subunit.

Functionally, this protein binds specifically to 23S rRNA; its binding is stimulated by other ribosomal proteins, e.g. L4, L17, and L20. It is important during the early stages of 50S assembly. It makes multiple contacts with different domains of the 23S rRNA in the assembled 50S subunit and ribosome. Its function is as follows. The globular domain of the protein is located near the polypeptide exit tunnel on the outside of the subunit, while an extended beta-hairpin is found that lines the wall of the exit tunnel in the center of the 70S ribosome. The polypeptide is Large ribosomal subunit protein uL22 (Thermomicrobium roseum (strain ATCC 27502 / DSM 5159 / P-2)).